Consider the following 230-residue polypeptide: Response regulator MprA (230 aa).

The 115-residue stretch at 4-118 (RILVVDDDRA…ELLARMRALL (115 aa)) folds into the Response regulatory domain. The residue at position 48 (Asp48) is a 4-aspartylphosphate. A DNA-binding region (ompR/PhoB-type) is located at residues 129–227 (SMAMRFSDLT…VRGVGYVLRE (99 aa)).

Monomer. Interaction with each conserved 8-bp repeat requires tandem binding by two protein monomers. Post-translationally, phosphorylated and dephosphorylated by MprB.

It is found in the cytoplasm. Member of the two-component regulatory system MprB/MprA which contributes to maintaining a balance among several systems involved in stress resistance and is required for establishment and maintenance of persistent infection in the host. Functions as a transcriptional regulator that recognizes a 19-bp nucleotide motif comprizing two loosely conserved 8-bp direct DNA-binding motif repeats separated by a 3-bp spacer region. MprB/MprA up-regulates expression of mprA and pepD. The chain is Response regulator MprA (mprA) from Mycobacterium bovis (strain ATCC BAA-935 / AF2122/97).